A 366-amino-acid chain; its full sequence is Phospho-N-acetylmuramoyl-pentapeptide-transferase (366 aa).

Transmembrane regions (helical) follow at residues 25-45 (AGAAMFTSALIVFLFGPAIIN), 70-90 (GTPTMGGLMILAGILGGSLLW), 93-113 (LSNVYVVAVLMVTLGFGAIGF), 134-154 (LGIEFLIAAIAVFFMMKMALA), 174-194 (FVINLGYFFVLFGAFVIVGAG), 205-225 (GLAIVPVMIAAATFGVIAYLA), 245-265 (LAVIVGAVIGAGLGFLWFNAP), 268-288 (AIFMGDTGSLALGGLIGSIAV), 297-317 (VIVGGLFVMETLSVIIQVFWF), and 343-363 (QVVIRFWIISVGLALLGLATL).

Belongs to the glycosyltransferase 4 family. MraY subfamily. Mg(2+) serves as cofactor.

The protein resides in the cell inner membrane. The enzyme catalyses UDP-N-acetyl-alpha-D-muramoyl-L-alanyl-gamma-D-glutamyl-meso-2,6-diaminopimeloyl-D-alanyl-D-alanine + di-trans,octa-cis-undecaprenyl phosphate = di-trans,octa-cis-undecaprenyl diphospho-N-acetyl-alpha-D-muramoyl-L-alanyl-D-glutamyl-meso-2,6-diaminopimeloyl-D-alanyl-D-alanine + UMP. It participates in cell wall biogenesis; peptidoglycan biosynthesis. Functionally, catalyzes the initial step of the lipid cycle reactions in the biosynthesis of the cell wall peptidoglycan: transfers peptidoglycan precursor phospho-MurNAc-pentapeptide from UDP-MurNAc-pentapeptide onto the lipid carrier undecaprenyl phosphate, yielding undecaprenyl-pyrophosphoryl-MurNAc-pentapeptide, known as lipid I. This Agrobacterium fabrum (strain C58 / ATCC 33970) (Agrobacterium tumefaciens (strain C58)) protein is Phospho-N-acetylmuramoyl-pentapeptide-transferase.